Reading from the N-terminus, the 244-residue chain is 1-(5-phosphoribosyl)-5-[(5-phosphoribosylamino)methylideneamino] imidazole-4-carboxamide isomerase (244 aa).

Asp-10 (proton acceptor) is an active-site residue. Asp-132 functions as the Proton donor in the catalytic mechanism.

It belongs to the HisA/HisF family.

Its subcellular location is the cytoplasm. The enzyme catalyses 1-(5-phospho-beta-D-ribosyl)-5-[(5-phospho-beta-D-ribosylamino)methylideneamino]imidazole-4-carboxamide = 5-[(5-phospho-1-deoxy-D-ribulos-1-ylimino)methylamino]-1-(5-phospho-beta-D-ribosyl)imidazole-4-carboxamide. The protein operates within amino-acid biosynthesis; L-histidine biosynthesis; L-histidine from 5-phospho-alpha-D-ribose 1-diphosphate: step 4/9. The polypeptide is 1-(5-phosphoribosyl)-5-[(5-phosphoribosylamino)methylideneamino] imidazole-4-carboxamide isomerase (Xanthomonas axonopodis pv. citri (strain 306)).